Reading from the N-terminus, the 109-residue chain is MYTKIALLGLVGSAAAFNAPMMTVRRDAIATGAAAAVVAPMLRPAGAAMKKDSKAPCVEVFDERDGCKAAGTQKASGDDGFCVKVSMKAIKMNAAEATSVTKNYNTKLL.

Residues D52, S53, E63, R64, C67, T72, K74, A75, and K84 each contribute to the (2R,3E)-phycoerythrobilin site.

It belongs to the phycoerythrin family. Heterotetramer of 2 different alpha chains and 2 identical beta chains which form 2 alpha-beta heterodimers within the heterotetramer. The two alpha-beta heterodimers are rotated to an open configuration in contrast to the closed configuration found in other cryptophyte species due to the insertion of a single amino acid, Asp-65, in a conserved region of the alpha chain. In the open form, the central chromophores are not in physical contact but are separated by a water-filled channel. Contains three phycoerythrobilin chromophores with binding mediated by both the alpha and beta subunits.

Its subcellular location is the plastid. It is found in the chloroplast thylakoid membrane. Its function is as follows. Light-harvesting photosynthetic tetrapyrrole chromophore-protein from the phycobiliprotein complex. The protein is Phycoerythrin alpha-2 subunit of Hemiselmis andersenii (Cryptophyte alga).